Here is a 733-residue protein sequence, read N- to C-terminus: E3 ubiquitin-protein ligase COP1 (733 aa).

Residues 1-43 (MSGSRQAGSGSAGTSPGSSAASSVTSASSSLSSSPSPPSVAAS) are disordered. A Nuclear localization signal 1 motif is present at residues 111–115 (SSRKR). The RING-type zinc-finger motif lies at 138–176 (CPICFDMIEEAYMTKCGHSFCYKCIHQSLEDNNRCPKCN). The short motif at 197 to 208 (KQKQRFEEKRFK) is the Nuclear localization signal 2 element. Residues 231–306 (DQDNLDLANV…RVEEMSGLYS (76 aa)) are a coiled coil. Positions 237-247 (LANVNLMLELL) match the Nuclear export signal motif. Positions 307 to 327 (PVSEDSTVPQFEAPSPSHSSI) are disordered. WD repeat units follow at residues 421–460 (NGSS…QDAV), 470–510 (TCNS…RSKV), 513–553 (EHEK…SVAS), 555–595 (EAKA…QPIM), 599–637 (GHRK…CLRS), 640–679 (GHIN…TLLT), and 695–731 (EDDT…KVLE). Positions 645-647 (KNF) are interaction with TRIB1.

This sequence belongs to the COP1 family. As to quaternary structure, homodimer. Homodimerization is mediated by the coiled coil domain. Component of the DCX DET1-COP1 ubiquitin ligase complex at least composed of RBX1, DET1, DDB1, CUL4A and COP1. Isoform 2 does not interact with CUL4A but still binds to RBX1, suggesting that the interaction may be mediated by another cullin protein. Isoform 1 and isoform 2 interact with CUL5 but not with CUL1, CUL2 not CUL3. Interacts with bZIP transcription factors JUN, JUNB and JUND but not with FOS, ATF2 nor XBP1. Interacts with p53 (TP53). Interacts with COPS6; this interaction stabilizes RFWD2 through reducing its auto-ubiquitination and decelerating its turnover rate. Interacts with SFN; this interaction leads to SFN degradation. Interacts with p53/TP53 and MTA1. Interacts with TRIB1 (via C-terminus) and TRIB2.

Its subcellular location is the nucleus speckle. It localises to the cytoplasm. It catalyses the reaction S-ubiquitinyl-[E2 ubiquitin-conjugating enzyme]-L-cysteine + [acceptor protein]-L-lysine = [E2 ubiquitin-conjugating enzyme]-L-cysteine + N(6)-ubiquitinyl-[acceptor protein]-L-lysine.. Its pathway is protein modification; protein ubiquitination. TRIB1 competes with substrates for RFWD2 binding. In terms of biological role, E3 ubiquitin-protein ligase that mediates ubiquitination and subsequent proteasomal degradation of target proteins. E3 ubiquitin ligases accept ubiquitin from an E2 ubiquitin-conjugating enzyme in the form of a thioester and then directly transfers the ubiquitin to targeted substrates. Involved in JUN ubiquitination and degradation. Directly involved in p53 (TP53) ubiquitination and degradation, thereby abolishing p53-dependent transcription and apoptosis. Ubiquitinates p53 independently of MDM2 or RCHY1. Probably mediates E3 ubiquitin ligase activity by functioning as the essential RING domain subunit of larger E3 complexes. In contrast, it does not constitute the catalytic RING subunit in the DCX DET1-COP1 complex that negatively regulates JUN, the ubiquitin ligase activity being mediated by RBX1. Involved in 14-3-3 protein sigma/SFN ubiquitination and proteasomal degradation, leading to AKT activation and promotion of cell survival. Ubiquitinates MTA1 leading to its proteasomal degradation. Upon binding to TRIB1, ubiquitinates CEBPA, which lacks a canonical COP1-binding motif. In Mus musculus (Mouse), this protein is E3 ubiquitin-protein ligase COP1.